A 404-amino-acid chain; its full sequence is 4-hydroxy-3-methylbut-2-enyl diphosphate reductase (404 aa).

Residue Cys-66 participates in [4Fe-4S] cluster binding. Residue His-96 coordinates (2E)-4-hydroxy-3-methylbut-2-enyl diphosphate. His-96 lines the dimethylallyl diphosphate pocket. His-96 is an isopentenyl diphosphate binding site. Cys-157 lines the [4Fe-4S] cluster pocket. His-185 contributes to the (2E)-4-hydroxy-3-methylbut-2-enyl diphosphate binding site. His-185 lines the dimethylallyl diphosphate pocket. His-185 lines the isopentenyl diphosphate pocket. Residue Glu-187 is the Proton donor of the active site. A (2E)-4-hydroxy-3-methylbut-2-enyl diphosphate-binding site is contributed by Thr-250. Cys-288 contacts [4Fe-4S] cluster. The (2E)-4-hydroxy-3-methylbut-2-enyl diphosphate site is built by Ser-317, Ser-318, Asn-319, and Ser-380. The dimethylallyl diphosphate site is built by Ser-317, Ser-318, Asn-319, and Ser-380. Residues Ser-317, Ser-318, Asn-319, and Ser-380 each contribute to the isopentenyl diphosphate site.

The protein belongs to the IspH family. [4Fe-4S] cluster is required as a cofactor.

The catalysed reaction is isopentenyl diphosphate + 2 oxidized [2Fe-2S]-[ferredoxin] + H2O = (2E)-4-hydroxy-3-methylbut-2-enyl diphosphate + 2 reduced [2Fe-2S]-[ferredoxin] + 2 H(+). It carries out the reaction dimethylallyl diphosphate + 2 oxidized [2Fe-2S]-[ferredoxin] + H2O = (2E)-4-hydroxy-3-methylbut-2-enyl diphosphate + 2 reduced [2Fe-2S]-[ferredoxin] + 2 H(+). The protein operates within isoprenoid biosynthesis; dimethylallyl diphosphate biosynthesis; dimethylallyl diphosphate from (2E)-4-hydroxy-3-methylbutenyl diphosphate: step 1/1. It participates in isoprenoid biosynthesis; isopentenyl diphosphate biosynthesis via DXP pathway; isopentenyl diphosphate from 1-deoxy-D-xylulose 5-phosphate: step 6/6. Catalyzes the conversion of 1-hydroxy-2-methyl-2-(E)-butenyl 4-diphosphate (HMBPP) into a mixture of isopentenyl diphosphate (IPP) and dimethylallyl diphosphate (DMAPP). Acts in the terminal step of the DOXP/MEP pathway for isoprenoid precursor biosynthesis. This Prochlorococcus marinus (strain MIT 9211) protein is 4-hydroxy-3-methylbut-2-enyl diphosphate reductase.